We begin with the raw amino-acid sequence, 296 residues long: Protoheme IX farnesyltransferase (296 aa).

Helical transmembrane passes span 14–34, 36–56, 75–95, 99–119, 133–153, 163–183, 209–229, 234–254, and 265–285; these read IIFG…KGVI, YPLF…GCVF, VLVK…ILGI, LLLY…GFVI, VYGT…GYCA, LILL…IAIF, ITLY…SGYA, LVVA…GYKA, and FVFS…DFNV.

This sequence belongs to the UbiA prenyltransferase family. Protoheme IX farnesyltransferase subfamily.

Its subcellular location is the cell inner membrane. The enzyme catalyses heme b + (2E,6E)-farnesyl diphosphate + H2O = Fe(II)-heme o + diphosphate. It functions in the pathway porphyrin-containing compound metabolism; heme O biosynthesis; heme O from protoheme: step 1/1. Its function is as follows. Converts heme B (protoheme IX) to heme O by substitution of the vinyl group on carbon 2 of heme B porphyrin ring with a hydroxyethyl farnesyl side group. The chain is Protoheme IX farnesyltransferase from Yersinia enterocolitica serotype O:8 / biotype 1B (strain NCTC 13174 / 8081).